The primary structure comprises 186 residues: Large ribosomal subunit protein uL10 (186 aa).

It belongs to the universal ribosomal protein uL10 family. Part of the ribosomal stalk of the 50S ribosomal subunit. The N-terminus interacts with L11 and the large rRNA to form the base of the stalk. The C-terminus forms an elongated spine to which L12 dimers bind in a sequential fashion forming a multimeric L10(L12)X complex.

Forms part of the ribosomal stalk, playing a central role in the interaction of the ribosome with GTP-bound translation factors. This is Large ribosomal subunit protein uL10 from Nitrosococcus oceani (strain ATCC 19707 / BCRC 17464 / JCM 30415 / NCIMB 11848 / C-107).